Consider the following 976-residue polypeptide: Peptidylglycine alpha-amidating monooxygenase (976 aa).

A signal peptide spans 1-25; that stretch reads MAGRARSGLLLLLLGLLALQSSCLA. The segment at 1–497 is peptidylglycine alpha-hydroxylating monooxygenase; the sequence is MAGRARSGLL…EGPWEPEPSG (497 aa). Residues 26–35 constitute a propeptide that is removed on maturation; sequence FRSPLSVFKR. The Intragranular segment spans residues 36-866; the sequence is FKETTRSFSN…QKLSTEPGSG (831 aa). Intrachain disulfides connect cysteine 47-cysteine 186, cysteine 81-cysteine 126, cysteine 114-cysteine 131, cysteine 227-cysteine 334, and cysteine 293-cysteine 315. Cu(2+) contacts are provided by histidine 107 and histidine 108. Histidine 172, histidine 242, histidine 244, and methionine 314 together coordinate Cu(2+). The peptidyl-alpha-hydroxyglycine alpha-amidating lyase stretch occupies residues 498–820; that stretch reads DFHVEEELDW…LTEKMEHRSV (323 aa). NHL repeat units lie at residues 501–544, 570–611, 620–665, and 673–717; these read VEEE…NSFD, AEIL…LDPH, LGRS…FSPS, and GEES…FKTD. Valine 520 contacts Ca(2+). Arginine 533 lines the a protein pocket. Histidine 585 is a Zn(2+) binding site. Leucine 587 contributes to the Ca(2+) binding site. The cysteines at positions 634 and 655 are disulfide-linked. Tyrosine 654 contacts a protein. Histidine 690 provides a ligand contact to Zn(2+). Cysteine 702 and cysteine 713 are oxidised to a cystine. Arginine 706 provides a ligand contact to a protein. An N-linked (GlcNAc...) asparagine glycan is attached at asparagine 765. One copy of the NHL 5 repeat lies at 769-812; that stretch reads GEIIDVFKPVRKHFDMPHDIVASEDGTVYIGDAHTNTVWKFTLT. At valine 774 the chain carries Sulfotyrosine. Histidine 786 is a binding site for Zn(2+). Aspartate 787 contacts Ca(2+). Glutamate 792 is modified (sulfotyrosine). A helical transmembrane segment spans residues 867–890; it reads VSVVLITTLLVIPVLVLLAIVMFI. The Cytoplasmic segment spans residues 891–976; it reads RWKKSRAFGD…APLPKPAPSS (86 aa). Serine 921, serine 932, and serine 945 each carry phosphoserine. The interval 928–945 is interaction with RASSF9; the sequence is NFFASRKGYSRKGFDRVS. Residues 940 to 976 form a disordered region; sequence GFDRVSTEGSDQEKDEDDGTESEEEYSAPLPKPAPSS. At threonine 946 the chain carries Phosphothreonine. At serine 949 the chain carries Phosphoserine. The segment covering 952-965 has biased composition (acidic residues); that stretch reads EKDEDDGTESEEEY. Threonine 959 is subject to Phosphothreonine. A Phosphoserine modification is found at serine 961.

In the C-terminal section; belongs to the peptidyl-alpha-hydroxyglycine alpha-amidating lyase family. It in the N-terminal section; belongs to the copper type II ascorbate-dependent monooxygenase family. Monomer. Interacts with RASSF9. The cofactor is Zn(2+). Requires Cu(2+) as cofactor.

The protein resides in the cytoplasmic vesicle. The protein localises to the secretory vesicle membrane. Its subcellular location is the membrane. It localises to the secreted. The catalysed reaction is a [peptide]-C-terminal glycine + 2 L-ascorbate + O2 = a [peptide]-C-terminal (2S)-2-hydroxyglycine + 2 monodehydro-L-ascorbate radical + H2O. It carries out the reaction a [peptide]-C-terminal (2S)-2-hydroxyglycine = a [peptide]-C-terminal amide + glyoxylate. It catalyses the reaction N-dodecanoylglycine + 2 L-ascorbate + O2 = N-dodecanoyl-(2S)-hydroxyglycine + 2 monodehydro-L-ascorbate radical + H2O. The enzyme catalyses N-dodecanoyl-(2S)-hydroxyglycine = dodecanamide + glyoxylate. The catalysed reaction is N-(9Z,12Z,15Z)-octadecatrienoylglycine + 2 L-ascorbate + O2 = N-(9Z,12Z,15Z)-octadecatrienoyl-(2S)-hydroxyglycine + 2 monodehydro-L-ascorbate radical + H2O. It carries out the reaction N-(9Z,12Z,15Z)-octadecatrienoyl-(2S)-hydroxyglycine = (9Z,12Z,15Z)-octadecatrienamide + glyoxylate. It catalyses the reaction N-(9Z-octadecenoyl)glycine + 2 L-ascorbate + O2 = N-(9Z-octadecenoyl)-(2S)-hydroxyglycine + 2 monodehydro-L-ascorbate radical + H2O. The enzyme catalyses N-(9Z-octadecenoyl)-(2S)-hydroxyglycine = (9Z)-octadecenamide + glyoxylate. The catalysed reaction is N-tetradecanoylglycine + 2 L-ascorbate + O2 = N-tetradecanoyl-(2S)-hydroxyglycine + 2 monodehydro-L-ascorbate radical + H2O. It carries out the reaction N-tetradecanoyl-(2S)-hydroxyglycine = tetradecamide + glyoxylate. It catalyses the reaction N-decanoylglycine + 2 L-ascorbate + O2 = N-decanoyl-(2S)-hydroxyglycine + 2 monodehydro-L-ascorbate radical + H2O. The enzyme catalyses N-decanoyl-(2S)-hydroxyglycine = decanamide + glyoxylate. The catalysed reaction is N-octanoylglycine + 2 L-ascorbate + O2 = N-octanoyl-(2S)-hydroxyglycine + 2 monodehydro-L-ascorbate radical + H2O. It carries out the reaction N-octanoyl-(2S)-hydroxyglycine = octanamide + glyoxylate. PAM activity is inhibited by EDTA, phenylglyoxal and diethyl pyrocarbonate. PAL activity is stimulated by cadmium and inhibited by mercury. Its function is as follows. Bifunctional enzyme that catalyzes amidation of the C-terminus of proteins. Alpha-amidation is present at the C-terminus of many endocrine hormones and neuropeptides and is required for their activity. C-terminal amidation also takes place in response to protein fragmentation triggered by oxidative stress, promoting degradation of amidated protein fragments by the proteasome. Alpha-amidation involves two sequential reactions, both of which are catalyzed by separate catalytic domains of the enzyme. The first step, catalyzed by peptidyl alpha-hydroxylating monooxygenase (PHM) domain, is the copper-, ascorbate-, and O2- dependent stereospecific hydroxylation (with S stereochemistry) at the alpha-carbon (C-alpha) of the C-terminal glycine of the peptidylglycine substrate. The second step, catalyzed by the peptidylglycine amidoglycolate lyase (PAL) domain, is the zinc-dependent cleavage of the N-C-alpha bond, producing the alpha-amidated peptide and glyoxylate. Similarly, catalyzes the two-step conversion of an N-fatty acylglycine to a primary fatty acid amide and glyoxylate. The polypeptide is Peptidylglycine alpha-amidating monooxygenase (Rattus norvegicus (Rat)).